Consider the following 423-residue polypeptide: Flavohemoprotein B (423 aa).

Positions 1 to 136 (MLSQKSIQII…VAQAFMDAEE (136 aa)) constitute a Globin domain. His-83 provides a ligand contact to heme b. Catalysis depends on charge relay system residues Tyr-93 and Glu-135. A reductase region spans residues 149–423 (WKDTREFVVD…LRGVKNIIEN (275 aa)). The region spanning 150–268 (KDTREFVVDR…SVPAGDFVVN (119 aa)) is the FAD-binding FR-type domain. FAD contacts are provided by residues Tyr-188 and 212-215 (RHYS). 281 to 286 (GVGINP) is a binding site for NADP(+). 400–403 (LFGP) serves as a coordination point for FAD.

This sequence belongs to the globin family. Two-domain flavohemoproteins subfamily. In the C-terminal section; belongs to the flavoprotein pyridine nucleotide cytochrome reductase family. The cofactor is FAD. Requires heme b as cofactor.

The protein resides in the cytoplasm. The enzyme catalyses 2 nitric oxide + NADPH + 2 O2 = 2 nitrate + NADP(+) + H(+). It catalyses the reaction 2 nitric oxide + NADH + 2 O2 = 2 nitrate + NAD(+) + H(+). Functionally, is involved in NO detoxification in an aerobic process, termed nitric oxide dioxygenase (NOD) reaction that utilizes O(2) and NAD(P)H to convert NO to nitrate, which protects the cell from various noxious nitrogen compounds. Therefore, plays a central role in the inducible response to nitrosative stress. In terms of biological role, in the presence of oxygen and NADH, it has NADH oxidase activity, which leads to the generation of superoxide and H(2)O(2). Under anaerobic conditions, it also exhibits nitric oxide reductase and FAD reductase activities. However, all these reactions are much lower than NOD activity. This chain is Flavohemoprotein B (fhbB), found in Dictyostelium discoideum (Social amoeba).